A 310-amino-acid chain; its full sequence is Vomeronasal type-1 receptor 50 (310 aa).

The Extracellular segment spans residues 1–16; it reads MSKANLLHTDNNMKIT. A helical membrane pass occupies residues 17 to 37; the sequence is LFSEVSVGISANSILFVVHLC. Residues 38–50 lie on the Cytoplasmic side of the membrane; that stretch reads KLLHENKPKPIDL. The chain crosses the membrane as a helical span at residues 51 to 71; that stretch reads YIAFFSITQLMLLITMGLIAV. The Extracellular portion of the chain corresponds to 72–93; sequence DMFMPWGRWDSTTCQSLIYLHR. A disulfide bridge links C85 with C172. The helical transmembrane segment at 94–114 threads the bilayer; the sequence is LLRGLTFCATCLLNVLWTITL. Residues 115–134 lie on the Cytoplasmic side of the membrane; that stretch reads SPRSSCLTKFKHKSPHHISG. The chain crosses the membrane as a helical span at residues 135–155; the sequence is AFLFFCVLYMSFSSHLLVSII. Residues 156–193 lie on the Extracellular side of the membrane; it reads ATFNSTSDNFLYVTQSCSILPVSYSRTSILSTMMTMRE. A glycan (N-linked (GlcNAc...) asparagine) is linked at N159. The chain crosses the membrane as a helical span at residues 194-214; that stretch reads AFLIGLMALSSGYVVVLLWRH. Residues 215–237 are Cytoplasmic-facing; the sequence is KKQARHLHSTSLSSKASPEQRAT. Residues 238-258 form a helical membrane-spanning segment; that stretch reads STIMLLMGFFVVLYILDTVIF. Topologically, residues 259–269 are extracellular; the sequence is QARLKFKDVST. A helical transmembrane segment spans residues 270–290; the sequence is FFCVKIIISHSYATFSPFVFI. Over 291–310 the chain is Cytoplasmic; it reads CNDKYMIKFVTSMCGRIVNV.

The protein belongs to the G-protein coupled receptor 1 family. Expressed in a subset of sensory neurons located in the apical layer of the vomeronasal organ.

It is found in the cell membrane. Putative pheromone receptor implicated in the regulation of social and reproductive behavior. The chain is Vomeronasal type-1 receptor 50 (Vmn1r50) from Mus musculus (Mouse).